Reading from the N-terminus, the 268-residue chain is Undecaprenyl-diphosphatase (268 aa).

A run of 8 helical transmembrane segments spans residues F3–P23, F46–L66, L84–I104, V107–L127, Y144–V164, A185–F205, F213–V233, and F246–I266.

It belongs to the UppP family.

The protein localises to the cell inner membrane. The catalysed reaction is di-trans,octa-cis-undecaprenyl diphosphate + H2O = di-trans,octa-cis-undecaprenyl phosphate + phosphate + H(+). Catalyzes the dephosphorylation of undecaprenyl diphosphate (UPP). Confers resistance to bacitracin. This chain is Undecaprenyl-diphosphatase, found in Brucella abortus (strain S19).